The primary structure comprises 427 residues: Lactadherin (427 aa).

The N-terminal stretch at 1-22 is a signal peptide; that stretch reads MQFSRVLAALCGVLLCASGLFA. 2 consecutive EGF-like domains span residues 24 to 61 and 64 to 108; these read SGDFCDSSLCLNGGTCLMGQDNDIYCLCPEGFTGLVCN and EKGP…IHCE. 3 disulfide bridges follow: Cys28-Cys39, Cys33-Cys49, and Cys51-Cys60. The N-linked (GlcNAc...) asparagine glycan is linked to Asn61. Cystine bridges form between Cys68–Cys79, Cys73–Cys96, Cys98–Cys107, Cys111–Cys267, Cys254–Cys258, and Cys272–Cys427. The Cell attachment site signature appears at 87–89; sequence RGD. 2 F5/8 type C domains span residues 111–267 and 272–427; these read CSTK…LLGC and CSEP…LLGC. N-linked (GlcNAc...) asparagine glycosylation occurs at Asn230. N-linked (GlcNAc...) asparagine glycans are attached at residues Asn280 and Asn390.

Spleen, lung, heart, brain and muscle.

It is found in the membrane. It localises to the secreted. Its subcellular location is the cytoplasmic vesicle. The protein resides in the secretory vesicle. The protein localises to the acrosome membrane. Contributes to phagocytic removal of apoptotic cells in many tissues. Plays an important role in the maintenance of intestinal epithelial homeostasis and the promotion of mucosal healing. Promotes VEGF-dependent neovascularization. Specific ligand for the alpha-v/beta-3 and alpha-v/beta-5 receptors. Also binds to phosphatidylserine-enriched cell surfaces in a receptor-independent manner. Zona pellucida-binding protein which may play a role in gamete interaction. Appears to participate in the O-acetylation of GD3 ganglioside sialic acid. The protein is Lactadherin (Mfge8) of Rattus norvegicus (Rat).